Consider the following 532-residue polypeptide: Collagen alpha-1(XXIII) chain (532 aa).

Over 1 to 23 (MGAGERAAGGGGTQDPGAGCGAR) the chain is Cytoplasmic. A helical; Signal-anchor for type II membrane protein transmembrane segment spans residues 24–45 (ALGALCLLLSVGSATACLLLGA). The Extracellular portion of the chain corresponds to 46 to 532 (QAAALHGRVA…GLPVPGCWHK (487 aa)). A disordered region spans residues 102 to 532 (PSECICPPGP…GLPVPGCWHK (431 aa)). Collagen-like domains are found at residues 108–163 (PPGP…FGPR), 173–232 (GPPG…PGKK), 242–297 (GLPG…EQGD), and 313–372 (GPPG…MGLS). Composition is skewed to low complexity over residues 129–145 (QSGRDGYPGPLGLDGKP) and 157–172 (PGDFGPRGAQGQDGAA). Pro residues-rich tracts occupy residues 174 to 184 (PPGPPGPPGAR), 241 to 250 (PGLPGPPGPK), and 314 to 326 (PPGPQGAPGPPGI). Basic and acidic residues-rich tracts occupy residues 342–354 (DGEKGPKGPKGDP) and 380–393 (PKGEKGESASDHLQ). Pro residues predominate over residues 403–414 (PGPPGPPGPPGP). Collagen-like domains are found at residues 404 to 452 (GPPG…GPPG) and 455 to 514 (GLPG…PGLD). Basic and acidic residues-rich tracts occupy residues 427-441 (DGAKGEKGASGERGP) and 478-495 (RGEKGDRSERGEKGERGV).

In terms of assembly, homotrimer. In terms of processing, undergoes proteolytic cleavage by furin protease to yield a 60 kDa soluble form that forms a homotrimer and exhibits a low affinity interaction with heparin.

Its subcellular location is the cell membrane. The protein is Collagen alpha-1(XXIII) chain (Col23a1) of Rattus norvegicus (Rat).